The primary structure comprises 212 residues: MPIREIRHPLIRHKLGLMRRADISTKNFRELAQEVGSILTYEATSDLPLEHYNIDGWCGPVQVEKISGKKITVVPILRAGIGMLDGVLSLIPGAKVSAVGIARNEETFKAQTYLEKLVPEIEQRLAIIIDPMLATGGSMVATIDMLKKAGCKEIRALVLVAAPEGIAAVEAAHPDVLILTASIDERLDEHGYIVPGLGDAGDKIFGTKQKDI.

5-phospho-alpha-D-ribose 1-diphosphate-binding positions include R78, R103, and 130–138 (DPMLATGGS). Residues I193 and 198–200 (GDA) contribute to the uracil site. Residue D199 coordinates 5-phospho-alpha-D-ribose 1-diphosphate.

Belongs to the UPRTase family. The cofactor is Mg(2+).

It carries out the reaction UMP + diphosphate = 5-phospho-alpha-D-ribose 1-diphosphate + uracil. The protein operates within pyrimidine metabolism; UMP biosynthesis via salvage pathway; UMP from uracil: step 1/1. With respect to regulation, allosterically activated by GTP. In terms of biological role, catalyzes the conversion of uracil and 5-phospho-alpha-D-ribose 1-diphosphate (PRPP) to UMP and diphosphate. In Stutzerimonas stutzeri (strain A1501) (Pseudomonas stutzeri), this protein is Uracil phosphoribosyltransferase.